The sequence spans 600 residues: Sulfite reductase [NADPH] flavoprotein alpha-component (600 aa).

Residues 63–201 (ITLISASQTG…AAQAWRQRVV (139 aa)) form the Flavodoxin-like domain. FMN-binding positions include 69 to 74 (SQTGNA), 116 to 119 (STQG), and 152 to 161 (LGDTSYEHFC). Residues 235 to 449 (ESPLTATLSV…IEHNDNFRLP (215 aa)) enclose the FAD-binding FR-type domain. FAD-binding positions include threonine 323, alanine 357, 387–390 (RLYS), 405–407 (TVG), and 420–423 (GGAS). Residues 520–521 (SR), 526–530 (KIYVQ), and aspartate 562 contribute to the NADP(+) site. Residue tyrosine 600 coordinates FAD.

This sequence belongs to the NADPH-dependent sulphite reductase flavoprotein subunit CysJ family. It in the N-terminal section; belongs to the flavodoxin family. The protein in the C-terminal section; belongs to the flavoprotein pyridine nucleotide cytochrome reductase family. In terms of assembly, alpha(8)-beta(8). The alpha component is a flavoprotein, the beta component is a hemoprotein. FAD is required as a cofactor. FMN serves as cofactor.

The enzyme catalyses hydrogen sulfide + 3 NADP(+) + 3 H2O = sulfite + 3 NADPH + 4 H(+). Its pathway is sulfur metabolism; hydrogen sulfide biosynthesis; hydrogen sulfide from sulfite (NADPH route): step 1/1. Its function is as follows. Component of the sulfite reductase complex that catalyzes the 6-electron reduction of sulfite to sulfide. This is one of several activities required for the biosynthesis of L-cysteine from sulfate. The flavoprotein component catalyzes the electron flow from NADPH -&gt; FAD -&gt; FMN to the hemoprotein component. This chain is Sulfite reductase [NADPH] flavoprotein alpha-component, found in Cronobacter sakazakii (strain ATCC BAA-894) (Enterobacter sakazakii).